The following is a 366-amino-acid chain: MELAEIRNELEKTAQQIKDFRGSLDLDSMEVRIAELEDQMLDPNFWNDQQAAQKVINESNGYKETYQAFHALEEEQESMEISLELLKEEADEDLQEELEKDIKAYMATISAFELKLMLSDPYDKNNAILELHPGAGGTESQDWGSMLLRMYQRWSEKKGFKVEMLDYQAGDEAGIKSVTLLIKGHNAYGYLKAEKGVHRLVRISPFDSSGRRHTSFVSVDVMPELDGDIEIEVRTEDLKIDTYRATGAGGQHINTTDSAVRMTHIPSGIVVTCQSERSQLKNREQAMKMLKTKLYQKEQEEKERELAEIRGEQKEIGWGSQIRSYVFHPYSMVKDHRTNYETGNIQAVMDGDLDDFINAYLRSRIG.

The residue at position 251 (Gln-251) is an N5-methylglutamine.

This sequence belongs to the prokaryotic/mitochondrial release factor family. In terms of processing, methylated by PrmC. Methylation increases the termination efficiency of RF2.

It is found in the cytoplasm. In terms of biological role, peptide chain release factor 2 directs the termination of translation in response to the peptide chain termination codons UGA and UAA. This chain is Peptide chain release factor 2 (prfB), found in Listeria monocytogenes serovar 1/2a (strain ATCC BAA-679 / EGD-e).